The sequence spans 628 residues: Chaperone protein DnaK (628 aa).

Threonine 174 is subject to Phosphothreonine; by autocatalysis. The segment at 589-628 (AAGGAGPDMGAGAGPDMGAGASNGSAPYGDDVVDGDYKEV) is disordered. The span at 591–605 (GGAGPDMGAGAGPDM) shows a compositional bias: gly residues.

Belongs to the heat shock protein 70 family.

In terms of biological role, acts as a chaperone. In Lachnospira eligens (strain ATCC 27750 / DSM 3376 / VPI C15-48 / C15-B4) (Eubacterium eligens), this protein is Chaperone protein DnaK.